Here is a 143-residue protein sequence, read N- to C-terminus: Large ribosomal subunit protein uL11 (143 aa).

The protein belongs to the universal ribosomal protein uL11 family. As to quaternary structure, part of the ribosomal stalk of the 50S ribosomal subunit. Interacts with L10 and the large rRNA to form the base of the stalk. L10 forms an elongated spine to which L12 dimers bind in a sequential fashion forming a multimeric L10(L12)X complex. In terms of processing, one or more lysine residues are methylated.

In terms of biological role, forms part of the ribosomal stalk which helps the ribosome interact with GTP-bound translation factors. This Treponema denticola (strain ATCC 35405 / DSM 14222 / CIP 103919 / JCM 8153 / KCTC 15104) protein is Large ribosomal subunit protein uL11.